Here is a 496-residue protein sequence, read N- to C-terminus: Beta-amylase (496 aa).

Residues D54, H94, and D102 each contribute to the substrate site. E187 functions as the Proton donor in the catalytic mechanism. K296, H301, and T343 together coordinate substrate. E381 acts as the Proton acceptor in catalysis. Substrate contacts are provided by residues 382–383 (NA) and R421. A disordered region spans residues 455–496 (YNHGIPPLKRSGPKIPDDVLNEATKPIPPFPWDSETDMKVDG).

It belongs to the glycosyl hydrolase 14 family.

It catalyses the reaction Hydrolysis of (1-&gt;4)-alpha-D-glucosidic linkages in polysaccharides so as to remove successive maltose units from the non-reducing ends of the chains.. The protein is Beta-amylase (BMY1) of Medicago sativa (Alfalfa).